The following is a 242-amino-acid chain: Biosynthetic peptidoglycan transglycosylase (242 aa).

The chain crosses the membrane as a helical span at residues 19–39 (ILAALAVFWGGGIALFSVVPV).

Belongs to the glycosyltransferase 51 family.

The protein resides in the cell inner membrane. It carries out the reaction [GlcNAc-(1-&gt;4)-Mur2Ac(oyl-L-Ala-gamma-D-Glu-L-Lys-D-Ala-D-Ala)](n)-di-trans,octa-cis-undecaprenyl diphosphate + beta-D-GlcNAc-(1-&gt;4)-Mur2Ac(oyl-L-Ala-gamma-D-Glu-L-Lys-D-Ala-D-Ala)-di-trans,octa-cis-undecaprenyl diphosphate = [GlcNAc-(1-&gt;4)-Mur2Ac(oyl-L-Ala-gamma-D-Glu-L-Lys-D-Ala-D-Ala)](n+1)-di-trans,octa-cis-undecaprenyl diphosphate + di-trans,octa-cis-undecaprenyl diphosphate + H(+). The protein operates within cell wall biogenesis; peptidoglycan biosynthesis. Its function is as follows. Peptidoglycan polymerase that catalyzes glycan chain elongation from lipid-linked precursors. In Salmonella paratyphi B (strain ATCC BAA-1250 / SPB7), this protein is Biosynthetic peptidoglycan transglycosylase.